The chain runs to 168 residues: Ribosome maturation factor RimP (168 aa).

This sequence belongs to the RimP family.

The protein resides in the cytoplasm. Its function is as follows. Required for maturation of 30S ribosomal subunits. This is Ribosome maturation factor RimP from Bordetella parapertussis (strain 12822 / ATCC BAA-587 / NCTC 13253).